The primary structure comprises 226 residues: Ribonuclease 3 (226 aa).

Residues 7-129 (LPRLCRTLGY…IIGAIYLDSD (123 aa)) form the RNase III domain. Glu-42 contributes to the Mg(2+) binding site. Asp-46 is a catalytic residue. Asp-115 and Glu-118 together coordinate Mg(2+). The active site involves Glu-118. The DRBM domain maps to 156-226 (DAKTLLQEYL…AAQVLELLKK (71 aa)).

The protein belongs to the ribonuclease III family. Homodimer. Mg(2+) serves as cofactor.

It is found in the cytoplasm. It catalyses the reaction Endonucleolytic cleavage to 5'-phosphomonoester.. Digests double-stranded RNA. Involved in the processing of primary rRNA transcript to yield the immediate precursors to the large and small rRNAs (23S and 16S). Processes some mRNAs, and tRNAs when they are encoded in the rRNA operon. Processes pre-crRNA and tracrRNA of type II CRISPR loci if present in the organism. This chain is Ribonuclease 3, found in Shewanella sp. (strain ANA-3).